Here is a 359-residue protein sequence, read N- to C-terminus: UPF0496 protein At3g57100 (359 aa).

Residues 179 to 208 (HEELAKMVVKLEKTMKDIDKKLRRVRGRRA) adopt a coiled-coil conformation. Residues 214–234 (LLAPVIAVIFLSKLVAGLVPI) form a helical membrane-spanning segment.

This sequence belongs to the UPF0496 family.

It localises to the membrane. The sequence is that of UPF0496 protein At3g57100 from Arabidopsis thaliana (Mouse-ear cress).